A 109-amino-acid polypeptide reads, in one-letter code: Small ribosomal subunit protein uS10c (109 aa).

It belongs to the universal ribosomal protein uS10 family. Part of the 30S ribosomal subunit.

The protein localises to the plastid. Its subcellular location is the chloroplast. Functionally, involved in the binding of tRNA to the ribosomes. The polypeptide is Small ribosomal subunit protein uS10c (Cyanidium caldarium (Red alga)).